We begin with the raw amino-acid sequence, 1604 residues long: Ubiquitin carboxyl-terminal hydrolase 32 (1604 aa).

3 consecutive EF-hand domains span residues 91-126 (KDEE…VDGK), 228-263 (IRPS…CCRG), and 264-299 (PLAE…LLEV). 9 residues coordinate Ca(2+): Asp-241, Asn-243, Asp-245, His-247, Glu-252, Asp-277, Asp-279, Asp-281, and Glu-288. A DUSP domain is found at 369–585 (ATPEEEGQII…ANLALPRPVI (217 aa)). In terms of domain architecture, USP spans 734-1567 (TGLSNLGNTC…SAYILFYEQQ (834 aa)). Cys-743 acts as the Nucleophile in catalysis. Tyr-1173 carries the post-translational modification Phosphotyrosine. Disordered regions lie at residues 1343–1362 (KKVD…SKSP) and 1367–1431 (ANII…DASK). 4 positions are modified to phosphoserine: Ser-1350, Ser-1372, Ser-1376, and Ser-1454. Residues 1367–1399 (ANIISSPKGSPSSSRKSGTSCPSSKNSSPNSSP) show a composition bias toward low complexity. Catalysis depends on His-1526, which acts as the Proton acceptor. Ser-1588 carries the post-translational modification Phosphoserine. The residue at position 1601 (Cys-1601) is a Cysteine methyl ester. Residue Cys-1601 is the site of S-farnesyl cysteine attachment. Positions 1602-1604 (VLQ) are cleaved as a propeptide — removed in mature form.

Belongs to the peptidase C19 family.

Its subcellular location is the golgi apparatus membrane. It catalyses the reaction Thiol-dependent hydrolysis of ester, thioester, amide, peptide and isopeptide bonds formed by the C-terminal Gly of ubiquitin (a 76-residue protein attached to proteins as an intracellular targeting signal).. In terms of biological role, deubiquitinase that can remove conjugated ubiquitin from target proteins, such as RAB7A and LAMTOR1. Acts as a positive regulator of the mTORC1 signaling by mediating deubiquitination of LAMTOR1, thereby promoting the association between LAMTOR1 and the lysosomal V-ATPase complex and subsequent activation of the mTORC1 complex. This Homo sapiens (Human) protein is Ubiquitin carboxyl-terminal hydrolase 32 (USP32).